The primary structure comprises 1464 residues: Neuropathy target esterase sws (1464 aa).

The Lumenal segment spans residues 1–34; the sequence is MDVLELLRASATGCYNTIFSEAWHQYVHKQIAAA. The chain crosses the membrane as a helical span at residues 35–55; the sequence is VYWYGALFLLGVLLFVWFLYF. Residues 56-1464 are Cytoplasmic-facing; that stretch reads KRLARLRLRD…GNTTNNDTKN (1409 aa). A nucleoside 3',5'-cyclic phosphate is bound at residue 176–303; the sequence is IFGHFEKPIF…IRVIQVIMIR (128 aa). Disordered regions lie at residues 329-393 and 409-438; these read NKNS…LHYH and QQQQ…SSPT. Over residues 338 to 367 the composition is skewed to low complexity; that stretch reads TGQTTSNVQSQTSQATQSRPSGTTRTPTSP. Polar residues predominate over residues 409–420; sequence QQQQSLNSPRRN. S421 is subject to Phosphoserine. The segment covering 422–438 has biased composition (low complexity); sequence TAHVSEAAAASTASSPT. Residues 456–586 and 575–702 contribute to the a nucleoside 3',5'-cyclic phosphate site; these read ELGL…VVRR and IVLG…LSHR. Residues 928–1094 enclose the PNPLA domain; it reads LVLGGGGARG…VNNLPGHLWR (167 aa). The GXGXXG motif lies at 932–937; it reads GGGARG. The short motif at 959–963 is the GXSXG element; sequence GVSIG. The active-site Nucleophile is S961. Residue D1081 is the Proton acceptor of the active site. The DGA/G signature appears at 1081–1083; sequence DGG. S1175 is modified (phosphoserine). 2 disordered regions span residues 1352–1374 and 1400–1464; these read VDKA…PTPS and ATNT…DTKN. Positions 1429–1444 are enriched in basic and acidic residues; it reads KRTEQDEHELEHEQVV. The span at 1450–1464 shows a compositional bias: polar residues; sequence MDKQQGNTTNNDTKN.

This sequence belongs to the NTE family. In terms of assembly, interacts with Pka-C3; interaction inhibits the catalytic function of Pka-C3 and the esterase activity of sws.

The protein localises to the endoplasmic reticulum membrane. It catalyses the reaction a 1-acyl-sn-glycero-3-phosphocholine + H2O = sn-glycerol 3-phosphocholine + a fatty acid + H(+). Its function is as follows. Phospholipase B that deacylates intracellular phosphatidylcholine (PtdCho), generating glycerophosphocholine (GroPtdCho). This deacylation occurs at both sn-2 and sn-1 positions of PtdCho. Its specific chemical modification by certain organophosphorus (OP) compounds leads to distal axonopathy. Plays a role in the signaling mechanism between neurons and glia that regulates glia wrapping during development of the adult brain. Essential for membrane lipid homeostasis and cell survival in both neurons and glia of the adult brain. The chain is Neuropathy target esterase sws from Drosophila grimshawi (Hawaiian fruit fly).